The following is a 314-amino-acid chain: Pectin lyase (314 aa).

The active site involves R202.

It belongs to the polysaccharide lyase 1 family.

It carries out the reaction Eliminative cleavage of (1-&gt;4)-alpha-D-galacturonan methyl ester to give oligosaccharides with 4-deoxy-6-O-methyl-alpha-D-galact-4-enuronosyl groups at their non-reducing ends.. The polypeptide is Pectin lyase (pnl) (Pectobacterium carotovorum (Erwinia carotovora)).